A 334-amino-acid polypeptide reads, in one-letter code: Methionyl-tRNA formyltransferase (334 aa).

111 to 114 is a binding site for (6S)-5,6,7,8-tetrahydrofolate; it reads SILP.

This sequence belongs to the Fmt family.

The enzyme catalyses L-methionyl-tRNA(fMet) + (6R)-10-formyltetrahydrofolate = N-formyl-L-methionyl-tRNA(fMet) + (6S)-5,6,7,8-tetrahydrofolate + H(+). Attaches a formyl group to the free amino group of methionyl-tRNA(fMet). The formyl group appears to play a dual role in the initiator identity of N-formylmethionyl-tRNA by promoting its recognition by IF2 and preventing the misappropriation of this tRNA by the elongation apparatus. The chain is Methionyl-tRNA formyltransferase from Trichormus variabilis (strain ATCC 29413 / PCC 7937) (Anabaena variabilis).